A 143-amino-acid polypeptide reads, in one-letter code: Flagellar assembly factor FliW (143 aa).

The protein belongs to the FliW family. Interacts with translational regulator CsrA and flagellin(s).

It is found in the cytoplasm. In terms of biological role, acts as an anti-CsrA protein, binds CsrA and prevents it from repressing translation of its target genes, one of which is flagellin. Binds to flagellin and participates in the assembly of the flagellum. The sequence is that of Flagellar assembly factor FliW from Bacillus licheniformis (strain ATCC 14580 / DSM 13 / JCM 2505 / CCUG 7422 / NBRC 12200 / NCIMB 9375 / NCTC 10341 / NRRL NRS-1264 / Gibson 46).